Here is a 93-residue protein sequence, read N- to C-terminus: Small ribosomal subunit protein uS19 (93 aa).

The protein belongs to the universal ribosomal protein uS19 family.

In terms of biological role, protein S19 forms a complex with S13 that binds strongly to the 16S ribosomal RNA. The polypeptide is Small ribosomal subunit protein uS19 (Ehrlichia canis (strain Jake)).